The sequence spans 585 residues: YTH domain-containing family protein 3 (585 aa).

3 disordered regions span residues 1–52, 243–277, and 304–351; these read MSAT…YPPM, RKPA…MNIG, and PQPL…QQLQ. The residue at position 2 (serine 2) is an N-acetylserine. The span at 15–24 shows a compositional bias: polar residues; it reads NKVSVQNGSI. Phosphoserine is present on serine 23. The span at 244-254 shows a compositional bias: basic residues; the sequence is KPAKPQPKLKP. Residues 329–351 are compositionally biased toward low complexity; the sequence is QQQQGPQPQAQPHQVQPQQQQLQ. Residues 416–550 form the YTH domain; it reads GRVFIIKSYS…EKAKQVLKII (135 aa). Residues 422 to 424, aspartate 428, 438 to 439, asparagine 468, tryptophan 492, and tryptophan 497 each bind RNA; these read KSY and WC.

Belongs to the YTHDF family. YTHDF3 subfamily. As to quaternary structure, interacts with CNOT1; promoting recruitment of the CCR4-NOT complex. Interacts with YTHDF1. Interacts with YTHDF2. Interacts with PAN3. Post-translationally, (Microbial infection) Proteolytically cleaved by HIV-1 protease when incorporated into HIV-1 particles in a nucleocapsid-dependent-manner. Cleavage by HIV-1 protease probably ensures optimal infectivity of the mature virion.

Its subcellular location is the cytoplasm. The protein resides in the cytosol. The protein localises to the P-body. It is found in the stress granule. In terms of biological role, specifically recognizes and binds N6-methyladenosine (m6A)-containing RNAs, and regulates their stability. M6A is a modification present at internal sites of mRNAs and some non-coding RNAs and plays a role in mRNA stability and processing. Acts as a regulator of mRNA stability by promoting degradation of m6A-containing mRNAs via interaction with the CCR4-NOT complex or PAN3. The YTHDF paralogs (YTHDF1, YTHDF2 and YTHDF3) share m6A-containing mRNAs targets and act redundantly to mediate mRNA degradation and cellular differentiation. Acts as a negative regulator of type I interferon response by down-regulating interferon-stimulated genes (ISGs) expression: acts by binding to FOXO3 mRNAs. Binds to FOXO3 mRNAs independently of METTL3-mediated m6A modification. Can also act as a regulator of mRNA stability in cooperation with YTHDF2 by binding to m6A-containing mRNA and promoting their degradation. Recognizes and binds m6A-containing circular RNAs (circRNAs); circRNAs are generated through back-splicing of pre-mRNAs, a non-canonical splicing process promoted by dsRNA structures across circularizing exons. Promotes formation of phase-separated membraneless compartments, such as P-bodies or stress granules, by undergoing liquid-liquid phase separation upon binding to mRNAs containing multiple m6A-modified residues: polymethylated mRNAs act as a multivalent scaffold for the binding of YTHDF proteins, juxtaposing their disordered regions and thereby leading to phase separation. The resulting mRNA-YTHDF complexes then partition into different endogenous phase-separated membraneless compartments, such as P-bodies, stress granules or neuronal RNA granules. May also recognize and bind N1-methyladenosine (m1A)-containing mRNAs: inhibits trophoblast invasion by binding to m1A-methylated transcripts of IGF1R, promoting their degradation. Its function is as follows. Has some antiviral activity against HIV-1 virus: incorporated into HIV-1 particles in a nucleocapsid-dependent manner and reduces viral infectivity in the next cycle of infection. May interfere with this early step of the viral life cycle by binding to N6-methyladenosine (m6A) modified sites on the HIV-1 RNA genome. The polypeptide is YTH domain-containing family protein 3 (Homo sapiens (Human)).